A 568-amino-acid chain; its full sequence is MSNSKEIKSFLWTQSLRRELSGFCTNTRVQVIKDAQSLLHGLDFSEVSNIQRLMRKEKRDDSDLKRLRDLNQTVNNLVELKSSQQKNTLRVGALTSDDLLVLAADLDRLKAKVNRSERPLTGGVYMGNLTQQQLDQRKILLQLVGMGGSRVPPRGGDGIVRVWDVRNPDLLNNQFGTMPSLTLACLCKQGQEDLSDVVKALTDLGLVYTAKYPNLSDLDKLTHTHPVLGLIDGNKSAINISGYNFSLNAAVKAGASLLDGGNMLETIKVTPKNIDTILKCVLKVKRSVGMFVSDTPGERNPYENILYKICLSGDGWPYIACRTSISGRAWDNTEVDLGTNKDPINKGPPTSNKTAGAAGFNAGLTYSQMMELKDSMLQIDPTAKTWVDIEGRADDPVEIAIYQPSNGHYIHFYREPTDIKQFRQDAKYSHGIDVQDLFTTQPGLTSAVLENLPKNMVLTCQGVEDIRKLLDSQGRKDIKLIDVSMQKADARKFEHQIWDEYKHLCSMHTGIVVEKKKRGGKEEITPHCALLDCLMFEATTRNSLDIVIPRPVLSKDLVFRSATPKVIL.

The binding site for the cap structure m7GTP stretch occupies residues 54-240 (MRKEKRDDSD…IDGNKSAINI (187 aa)). Positions 388 and 390 each coordinate Mn(2+). Residues Glu-398, Cys-505, His-508, and Cys-528 each coordinate Zn(2+). Mn(2+) is bound at residue Asp-532.

It belongs to the arenaviridae nucleocapsid protein family. Homomultimerizes to form the nucleocapsid. Binds to viral genomic RNA. Interacts with glycoprotein G2. Interacts with protein Z; this interaction probably directs the encapsidated genome to budding sites. Interacts with protein L; this interaction does not interfere with Z-L interaction. Interacts with host IKBKE (via Protein kinase domain); the interaction inhibits IKBKE kinase activity.

Its subcellular location is the virion. It is found in the host cytoplasm. In terms of biological role, encapsidates the genome, protecting it from nucleases. The encapsidated genomic RNA is termed the nucleocapsid (NC). Serves as template for viral transcription and replication. The increased presence of protein N in host cell does not seem to trigger the switch from transcription to replication as observed in other negative strain RNA viruses. Through the interaction with host IKBKE, strongly inhibits the phosphorylation and nuclear translocation of host IRF3, a protein involved in interferon activation pathway, leading to the inhibition of interferon-beta and IRF3-dependent promoters activation. Also encodes a functional 3'-5' exoribonuclease that degrades preferentially dsRNA substrates and thereby participates in the suppression of interferon induction. This chain is Nucleoprotein, found in Praomys (African soft-furred rats).